A 150-amino-acid polypeptide reads, in one-letter code: UPF0178 protein PputW619_5044 (150 aa).

It belongs to the UPF0178 family.

In Pseudomonas putida (strain W619), this protein is UPF0178 protein PputW619_5044.